We begin with the raw amino-acid sequence, 362 residues long: Chemerin-like receptor 1 (362 aa).

Topologically, residues 1–37 are extracellular; it reads MEAEDYNASYEDYPDDVDPIVVLEELSPLEGRVVRIL. A glycan (N-linked (GlcNAc...) asparagine) is linked at Asn7. A helical membrane pass occupies residues 38–58; it reads LVAVYSVICLLGILGNGLVIV. Over 59–70 the chain is Cytoplasmic; the sequence is MITCKMKRTVNT. The helical transmembrane segment at 71 to 91 threads the bilayer; it reads VWFLNLAVADFLFNVFLPVHI. The Extracellular portion of the chain corresponds to 92–108; the sequence is AYAALDYHWVFGTAMCK. Residues Cys107 and Cys184 are joined by a disulfide bond. The chain crosses the membrane as a helical span at residues 109 to 129; that stretch reads ISNFLLIHNMFTSVFLLTVIS. Residues 130–151 lie on the Cytoplasmic side of the membrane; sequence FDRCVSVLLPVWSQNHRSVRLA. Residues 152-172 traverse the membrane as a helical segment; it reads YTACLVIWVLAFFLSSPSLVF. Topologically, residues 173-219 are extracellular; the sequence is RDTARLHGKISCFNNFSLSAAVSSPWPAHPQVDPVGSGRHKVVTITR. The N-linked (GlcNAc...) asparagine glycan is linked to Asn187. The chain crosses the membrane as a helical span at residues 220-240; the sequence is FLCGFLVPGLITTACYLTIVY. Residues 241-255 lie on the Cytoplasmic side of the membrane; sequence KLQRSRLAKTKKPFK. The chain crosses the membrane as a helical span at residues 256-276; the sequence is IILTIIVTFFLCWCPYHAFYL. The Extracellular portion of the chain corresponds to 277-281; that stretch reads LELRR. The helical transmembrane segment at 282 to 302 threads the bilayer; it reads GSVPPSVFSLGVPLATAIAIA. At 303 to 362 the chain is on the cytoplasmic side; that stretch reads NSCMNPILYVFMGQDFKKFRVALFSRLVNALSEDTGHSSYPSHRSFTKMSSMNERETGML. Ser334 is subject to Phosphoserine. The interval 336 to 362 is disordered; it reads DTGHSSYPSHRSFTKMSSMNERETGML. Thr337 bears the Phosphothreonine mark. A compositionally biased stretch (polar residues) spans 339 to 354; sequence HSSYPSHRSFTKMSSM. Residues Ser344, Ser347, and Ser353 each carry the phosphoserine modification.

It belongs to the chemokine-like receptor (CMKLR) family. As to expression, widely expressed in several tissues including adipose, muscle, liver and brain.

It is found in the cell membrane. Its function is as follows. Receptor for the chemoattractant adipokine chemerin/RARRES2 and for the omega-3 fatty acid derived molecule resolvin E1. Interaction with RARRES2 initiates activation of G proteins G(i)/G(o) and beta-arrestin pathways inducing cellular responses via second messenger pathways such as intracellular calcium mobilization, phosphorylation of MAP kinases MAPK1/MAPK3 (ERK1/2), TYRO3, MAPK14/P38MAPK and PI3K leading to multifunctional effects, like, reduction of immune responses, enhancing of adipogenesis and angionesis. Resolvin E1 down-regulates cytokine production in macrophages by reducing the activation of MAPK1/3 (ERK1/2) and NF-kappa-B. Positively regulates adipogenesis and adipocyte metabolism. This is Chemerin-like receptor 1 (CMLKR1) from Bos taurus (Bovine).